A 282-amino-acid polypeptide reads, in one-letter code: Transcription repressor MYB4 (282 aa).

2 consecutive HTH myb-type domains span residues 9-61 (KAHT…INYL) and 62-116 (RPDL…RRKL). 2 consecutive DNA-binding regions (H-T-H motif) follow at residues 37–61 (WRSLPKAAGLLRCGKSCRLRWINYL) and 89–112 (WSLIAGRLPGRTDNEIKNYWNTHI). The disordered stretch occupies residues 119–145 (RGIDPTSHRPIQESSASQDSKPTQLEP). Residues 130-145 (QESSASQDSKPTQLEP) show a composition bias toward polar residues.

In terms of assembly, interacts with BHLH12/MYC1 and BHLH42/TT8. Interacts with SAD2. Widely expressed at low level. Highly expressed in siliques. Weakly expressed in seedlings, young and mature leaves, cauline leaves, stems, flower buds and roots.

The protein localises to the nucleus. Its function is as follows. Transcription repressor involved in regulation of protection against UV. Mediates transcriptional repression of CYP73A5, the gene encoding trans-cinnamate 4-monooxygenase, thereby regulating the accumulation of the UV-protectant compound sinapoylmalate. This is Transcription repressor MYB4 (MYB4) from Arabidopsis thaliana (Mouse-ear cress).